The following is a 342-amino-acid chain: Galactose mutarotase (342 aa).

Serine 14 is modified (phosphoserine). Beta-D-galactose-binding positions include 81–82 (NR) and histidine 107. Serine 124 is modified (phosphoserine). Residue histidine 176 is the Proton donor of the active site. Residues 176–178 (HSY), aspartate 243, glutamine 279, and glutamate 307 contribute to the beta-D-galactose site. Glutamate 307 acts as the Proton acceptor in catalysis.

This sequence belongs to the aldose epimerase family. As to quaternary structure, monomer.

It localises to the cytoplasm. The catalysed reaction is alpha-D-galactose = beta-D-galactose. It carries out the reaction alpha-D-glucose = beta-D-glucose. It functions in the pathway carbohydrate metabolism; hexose metabolism. It participates in carbohydrate metabolism; galactose metabolism. Functionally, mutarotase that catalyzes the interconversion of beta-D-galactose and alpha-D-galactose during galactose metabolism. Beta-D-galactose is metabolized in the liver into glucose 1-phosphate, the primary metabolic fuel, by the action of four enzymes that constitute the Leloir pathway: GALM, GALK1 (galactokinase), GALT (galactose-1-phosphate uridylyltransferase) and GALE (UDP-galactose-4'-epimerase). Involved in the maintenance of the equilibrium between the beta- and alpha-anomers of galactose, therefore ensuring a sufficient supply of the alpha-anomer for GALK1. Also active on D-glucose although shows a preference for galactose over glucose. The protein is Galactose mutarotase (Galm) of Rattus norvegicus (Rat).